Reading from the N-terminus, the 158-residue chain is SsrA-binding protein (158 aa).

It belongs to the SmpB family.

Its subcellular location is the cytoplasm. In terms of biological role, required for rescue of stalled ribosomes mediated by trans-translation. Binds to transfer-messenger RNA (tmRNA), required for stable association of tmRNA with ribosomes. tmRNA and SmpB together mimic tRNA shape, replacing the anticodon stem-loop with SmpB. tmRNA is encoded by the ssrA gene; the 2 termini fold to resemble tRNA(Ala) and it encodes a 'tag peptide', a short internal open reading frame. During trans-translation Ala-aminoacylated tmRNA acts like a tRNA, entering the A-site of stalled ribosomes, displacing the stalled mRNA. The ribosome then switches to translate the ORF on the tmRNA; the nascent peptide is terminated with the 'tag peptide' encoded by the tmRNA and targeted for degradation. The ribosome is freed to recommence translation, which seems to be the essential function of trans-translation. In Psychrobacter sp. (strain PRwf-1), this protein is SsrA-binding protein.